We begin with the raw amino-acid sequence, 146 residues long: MKKVLLVNGPNLNRLGVREVNVYGKGTLETLETDMKQEAEKLGVGLECFQSNHEGALIDTIHEADGIYEGIILNPGAFTHYSYAIRDAIASISIPVIEVHISNIHQRESFRHESVTAAVCAGQIVGFGFYGYKLALFALLEKLGEA.

Catalysis depends on Tyr23, which acts as the Proton acceptor. Positions 74, 80, and 87 each coordinate substrate. Residue His100 is the Proton donor of the active site. Residues 101 to 102 and Arg111 contribute to the substrate site; that span reads IS.

It belongs to the type-II 3-dehydroquinase family. As to quaternary structure, homododecamer.

It catalyses the reaction 3-dehydroquinate = 3-dehydroshikimate + H2O. The protein operates within metabolic intermediate biosynthesis; chorismate biosynthesis; chorismate from D-erythrose 4-phosphate and phosphoenolpyruvate: step 3/7. In terms of biological role, catalyzes a trans-dehydration via an enolate intermediate. The polypeptide is 3-dehydroquinate dehydratase (Bacillus cytotoxicus (strain DSM 22905 / CIP 110041 / 391-98 / NVH 391-98)).